Here is a 319-residue protein sequence, read N- to C-terminus: Aspartate carbamoyltransferase catalytic subunit (319 aa).

Residues R54 and T55 each contribute to the carbamoyl phosphate site. K82 contacts L-aspartate. The carbamoyl phosphate site is built by R104, H134, and Q137. Positions 171 and 227 each coordinate L-aspartate. 2 residues coordinate carbamoyl phosphate: G271 and P272.

Belongs to the aspartate/ornithine carbamoyltransferase superfamily. ATCase family. As to quaternary structure, heterododecamer (2C3:3R2) of six catalytic PyrB chains organized as two trimers (C3), and six regulatory PyrI chains organized as three dimers (R2).

It carries out the reaction carbamoyl phosphate + L-aspartate = N-carbamoyl-L-aspartate + phosphate + H(+). The protein operates within pyrimidine metabolism; UMP biosynthesis via de novo pathway; (S)-dihydroorotate from bicarbonate: step 2/3. Its function is as follows. Catalyzes the condensation of carbamoyl phosphate and aspartate to form carbamoyl aspartate and inorganic phosphate, the committed step in the de novo pyrimidine nucleotide biosynthesis pathway. The sequence is that of Aspartate carbamoyltransferase catalytic subunit from Kineococcus radiotolerans (strain ATCC BAA-149 / DSM 14245 / SRS30216).